The sequence spans 700 residues: MGSLSPLSFLWGLLLLQGVLRPLRGDPVFIPPFIRMSSPEVRASLVGGSEDVTVSLTPLQIKEGVLPVPTCGGLRNETGDWNLTVSPQANMLEVTVRWKRGLDWCSPDETASFSEAPCIVQTLLVSASHNASCLAHLLIQVEIYPNTSVTHNASENMTVIPNQVYQPLGPCPCDLTAKACDIRCCCDQDCQPELRELFERFCFSGVFGGYVSPPSHHRCAARTTHQTPDWFPFLCVQSPPSTSPFLGHFYHGAISPRHSPGFETHSHLDLRDFFADASYKQGDPIMTTNGYFTIPQASLAGQCLQDAPVAFLRNFHSVCTTDLEVQERDRLIPEDMRIRTTGGLVTPTVTYEEATDLDKLITSPDTILSAGSAPRNVTVEEHYVFRWQNNSISSLDITIIRAEINAHQRGTMTQRFTVKFLSPNSGGEKEFSGNPGYQLGKPVRALHTDGMNVTTLHLWQPAGRGLCTSAALRPVLFGEDASSGCLLEVGIKENCTQLRENVLQRLDLLIQATHVARRGNSDYGDLSDGWLEVIRVDAPDAGADLPLSSANGMCPEVPTHVTIRILTAEAGAVEGEAQREILAVETRFSTVTWQYQCGLTCEEDKADLLPLSASVKFINIPAQMPRPTRFQINFTEYDCTRNELCWPQLLYPLTQYYQGEPRPQCVAKGLMLLSLLMLAILLRHPWVGMCKAWSSASIQH.

The N-terminal stretch at 1–25 (MGSLSPLSFLWGLLLLQGVLRPLRG) is a signal peptide. Topologically, residues 26-665 (DPVFIPPFIR…YYQGEPRPQC (640 aa)) are extracellular. Residues Asn76, Asn82, Asn146, Asn156, and Asn389 are each glycosylated (N-linked (GlcNAc...) asparagine). The chain crosses the membrane as a helical span at residues 666–682 (VAKGLMLLSLLMLAILL). The Cytoplasmic segment spans residues 683 to 700 (RHPWVGMCKAWSSASIQH).

Belongs to the tectonic family. As to quaternary structure, part of the tectonic-like complex (also named B9 complex).

It is found in the membrane. Its subcellular location is the cytoplasm. The protein localises to the cytoskeleton. The protein resides in the cilium basal body. Component of the tectonic-like complex, a complex localized at the transition zone of primary cilia and acting as a barrier that prevents diffusion of transmembrane proteins between the cilia and plasma membranes. Required for hedgehog signaling transduction. This is Tectonic-2 (Tctn2) from Rattus norvegicus (Rat).